The chain runs to 396 residues: Deoxyguanosinetriphosphate triphosphohydrolase-like protein (396 aa).

The 137-residue stretch at 62–198 (RLTHSLEVAQ…AALADDIAYN (137 aa)) folds into the HD domain.

The protein belongs to the dGTPase family. Type 2 subfamily.

This chain is Deoxyguanosinetriphosphate triphosphohydrolase-like protein, found in Jannaschia sp. (strain CCS1).